The following is a 349-amino-acid chain: Protein DMR6-LIKE OXYGENASE 1 (349 aa).

One can recognise a Fe2OG dioxygenase domain in the interval 197–296 (HAQHMAFNYY…RLSIPTFYFP (100 aa)). Tyrosine 206 contacts 2-oxoglutarate. Histidine 221, aspartate 223, and histidine 277 together coordinate Fe cation. Residues arginine 287 and serine 289 each coordinate 2-oxoglutarate.

Belongs to the iron/ascorbate-dependent oxidoreductase family. L-ascorbate serves as cofactor. Requires Fe(2+) as cofactor.

It carries out the reaction salicylate + NADH + O2 + H(+) = 2,3-dihydroxybenzoate + NAD(+) + H2O. Functionally, converts salicylic acid (SA) to both 2,3-dihydroxybenzoic acid (2,3-DHBA) and 2,5-DHBA in vitro but only 2,3-DHBA in vivo. Component of a negative feedback regulation system of SA levels during senescence. Regulates both onset and progression of leaf senescence. Negative regulator of defense against Hyaloperonospora arabidopsidis. Its function is as follows. (Microbial infection) Confers susceptibility to the downy mildew pathogen Hyaloperonospora arabidopsidis. This is Protein DMR6-LIKE OXYGENASE 1 from Arabidopsis thaliana (Mouse-ear cress).